A 377-amino-acid polypeptide reads, in one-letter code: NADH dehydrogenase [ubiquinone] 1 alpha subcomplex subunit 9, mitochondrial (377 aa).

The transit peptide at 1-35 (MAAAVRFQVVRALPMSRPAISAAATSVFCSSSHRQ) directs the protein to the mitochondrion. Position 175 is an N6-succinyllysine (Lys-175). Residues Lys-189 and Lys-370 each carry the N6-acetyllysine modification.

The protein belongs to the complex I NDUFA9 subunit family. Complex I is composed of 45 different subunits. This a component of the hydrophobic protein fraction. Interacts with BLOC1S1. Interacts with SLC2A4. Interacts with CLOCK. Interacts with RAB5IF. FAD serves as cofactor. Post-translationally, acetylated on lysine residues. BLOC1S1 is required for acetylation. Acetylated by CLOCK in a circadian manner. Expressed by the principal cells of the epididymis. Detected in flagella of epididymal sperm (at protein level).

The protein resides in the mitochondrion matrix. Its function is as follows. Accessory subunit of the mitochondrial membrane respiratory chain NADH dehydrogenase (Complex I), that is believed not to be involved in catalysis. Complex I functions in the transfer of electrons from NADH to the respiratory chain. The immediate electron acceptor for the enzyme is believed to be ubiquinone. This Rattus norvegicus (Rat) protein is NADH dehydrogenase [ubiquinone] 1 alpha subcomplex subunit 9, mitochondrial.